The chain runs to 267 residues: Indole-3-glycerol phosphate synthase (267 aa).

It belongs to the TrpC family.

It carries out the reaction 1-(2-carboxyphenylamino)-1-deoxy-D-ribulose 5-phosphate + H(+) = (1S,2R)-1-C-(indol-3-yl)glycerol 3-phosphate + CO2 + H2O. It participates in amino-acid biosynthesis; L-tryptophan biosynthesis; L-tryptophan from chorismate: step 4/5. The sequence is that of Indole-3-glycerol phosphate synthase from Polynucleobacter asymbioticus (strain DSM 18221 / CIP 109841 / QLW-P1DMWA-1) (Polynucleobacter necessarius subsp. asymbioticus).